The primary structure comprises 326 residues: Malate dehydrogenase (326 aa).

11 to 17 contributes to the NAD(+) binding site; it reads GAAGQIG. Substrate is bound by residues R92 and R98. Residues N105, Q112, and 129–131 contribute to the NAD(+) site; that span reads VGN. Residues N131 and R162 each coordinate substrate. Residue H187 is the Proton acceptor of the active site.

It belongs to the LDH/MDH superfamily. MDH type 2 family.

The enzyme catalyses (S)-malate + NAD(+) = oxaloacetate + NADH + H(+). Functionally, catalyzes the reversible oxidation of malate to oxaloacetate. This is Malate dehydrogenase from Alkalilimnicola ehrlichii (strain ATCC BAA-1101 / DSM 17681 / MLHE-1).